Here is a 252-residue protein sequence, read N- to C-terminus: Adenosylcobinamide-GDP ribazoletransferase (252 aa).

The next 7 membrane-spanning stretches (helical) occupy residues 36 to 56 (LVPI…MLLV), 59 to 79 (FFYK…TGGI), 109 to 129 (VGTN…VILT), 133 to 153 (PAYM…GSIV), 170 to 192 (SFID…VIFL), 199 to 218 (GYII…KYFT), and 228 to 248 (ILGA…YAVL).

This sequence belongs to the CobS family. Mg(2+) serves as cofactor.

It localises to the cell membrane. The enzyme catalyses alpha-ribazole + adenosylcob(III)inamide-GDP = adenosylcob(III)alamin + GMP + H(+). It carries out the reaction alpha-ribazole 5'-phosphate + adenosylcob(III)inamide-GDP = adenosylcob(III)alamin 5'-phosphate + GMP + H(+). It participates in cofactor biosynthesis; adenosylcobalamin biosynthesis; adenosylcobalamin from cob(II)yrinate a,c-diamide: step 7/7. Joins adenosylcobinamide-GDP and alpha-ribazole to generate adenosylcobalamin (Ado-cobalamin). Also synthesizes adenosylcobalamin 5'-phosphate from adenosylcobinamide-GDP and alpha-ribazole 5'-phosphate. The protein is Adenosylcobinamide-GDP ribazoletransferase of Clostridium acetobutylicum (strain ATCC 824 / DSM 792 / JCM 1419 / IAM 19013 / LMG 5710 / NBRC 13948 / NRRL B-527 / VKM B-1787 / 2291 / W).